The primary structure comprises 1095 residues: Voltage-gated inwardly rectifying potassium channel KCNH3 (1095 aa).

Residues 1–228 (MPAMRGLLAP…HCGALRATWD (228 aa)) are Cytoplasmic-facing. In terms of domain architecture, PAS spans 18-90 (IATRFDGTHS…QQIRKALDEH (73 aa)). The region spanning 93-145 (FKAELILYRKSGLPFWCLLDVIPIKNEKGEVALFLVSHKDISETKNRGGPDNW) is the PAC domain. A compositionally biased stretch (basic and acidic residues) spans 137–150 (KNRGGPDNWKERGG). The segment at 137–161 (KNRGGPDNWKERGGGRRRYGRAGSK) is disordered. The helical transmembrane segment at 229–249 (GFILLATLYVAVTVPYSVCVS) threads the bilayer. Residues 250 to 259 (TAREPSAARG) lie on the Extracellular side of the membrane. Residues 260–280 (PPSVCDLAVEVLFILDIVLNF) traverse the membrane as a helical segment. Over 281-302 (RTTFVSKSGQVVFAPKSICLHY) the chain is Cytoplasmic. Residues 303–323 (VTTWFLLDVIAALPFDLLHAF) form a helical membrane-spanning segment. Residues 324 to 331 (KVNVYVGA) are Extracellular-facing. The chain crosses the membrane as a helical; Voltage-sensor span at residues 332-352 (HLLKTVRLLRLLRLLPRLDRY). Topologically, residues 353–361 (SQYSAVVLT) are cytoplasmic. The helical transmembrane segment at 362 to 382 (LLMAVFALLAHWVACVWFYIG) threads the bilayer. Residues 383-464 (QQEIESSESE…GGPSLRSAYI (82 aa)) lie on the Extracellular side of the membrane. Residues 417-447 (PDGGNSSGQSENCSSSSSSSGSGGGRGSEAN) form a disordered region. Low complexity predominate over residues 419–436 (GGNSSGQSENCSSSSSSS). Asn421, Asn428, and Asn447 each carry an N-linked (GlcNAc...) asparagine glycan. The segment at residues 465–485 (TSLYFALSSLTSVGFGNVSAN) is an intramembrane region (pore-forming). The Selectivity filter motif lies at 476 to 481 (SVGFGN). Topologically, residues 486–490 (TDTEK) are extracellular. A helical transmembrane segment spans residues 491-511 (IFSICTMLIGALMHAVVFGNV). Residues 512–1095 (TAIIQRMYAR…QWTQEEGTGV (584 aa)) lie on the Cytoplasmic side of the membrane. Residue 593–708 (LFEAASRGCL…FAPRFSRGLR (116 aa)) participates in a nucleoside 3',5'-cyclic phosphate binding. Disordered stretches follow at residues 740–823 (EEKE…LPPM), 854–883 (VGQS…PSEA), and 965–1069 (GSVL…PWDP). The span at 784–796 (TAPRPRLGGRGRP) shows a compositional bias: basic residues. A compositionally biased stretch (low complexity) spans 857–872 (SGPECSSSPSPGTESG). Positions 974 to 991 (HPRPGQPPPLMAPWPWGP) are enriched in pro residues.

It belongs to the potassium channel family. H (Eag) (TC 1.A.1.20) subfamily. Kv12.2/KCNH3 sub-subfamily. In terms of assembly, the potassium channel is probably composed of a homo- or heterotetrameric complex of pore-forming alpha subunits that can associate with modulating beta subunits. Interacts with KCNE1 and KCNE3; these interactions regulate KCNH3 trafficking to the plasma membrane and its subsequent voltage-gated potassium channel activity. Post-translationally, N-glycosylated. N-glycosylation mediates traffick to the cell membrane but is not necessary for voltage-gated potassium channel activity. As to expression, detected in brain, but not in other tissues.

It is found in the cell membrane. It catalyses the reaction K(+)(in) = K(+)(out). Functionally, pore-forming (alpha) subunit of a voltage-gated inwardly rectifying potassium channel. Charactherized by a fast rate of activation during depolarization followed by a rapid inactivation at much more depolarized value causing inward rectification due to a C-type inactivation mechanism. Exhibits a rapid recovery from inactivation. This is Voltage-gated inwardly rectifying potassium channel KCNH3 from Mus musculus (Mouse).